The following is a 316-amino-acid chain: Ribosomal protein L11 methyltransferase (316 aa).

The S-adenosyl-L-methionine site is built by Thr157, Gly178, Asp200, and Asn243.

The protein belongs to the methyltransferase superfamily. PrmA family.

It is found in the cytoplasm. The enzyme catalyses L-lysyl-[protein] + 3 S-adenosyl-L-methionine = N(6),N(6),N(6)-trimethyl-L-lysyl-[protein] + 3 S-adenosyl-L-homocysteine + 3 H(+). In terms of biological role, methylates ribosomal protein L11. This is Ribosomal protein L11 methyltransferase from Streptococcus pneumoniae serotype 4 (strain ATCC BAA-334 / TIGR4).